The following is a 192-amino-acid chain: Adenylate kinase (192 aa).

10–15 (GSGKGT) provides a ligand contact to ATP. Residues 30-59 (STGDMLREVISRETEVGRKAKAIINAGALV) are NMP. AMP-binding positions include threonine 31, arginine 36, 57 to 59 (ALV), 85 to 88 (GYPR), and glutamine 92. The interval 126 to 142 (KRVQETIAVGGQVRSDD) is LID. Arginine 127 lines the ATP pocket. AMP contacts are provided by arginine 139 and arginine 150. An ATP-binding site is contributed by methionine 178.

The protein belongs to the adenylate kinase family. In terms of assembly, monomer.

The protein localises to the cytoplasm. It catalyses the reaction AMP + ATP = 2 ADP. It functions in the pathway purine metabolism; AMP biosynthesis via salvage pathway; AMP from ADP: step 1/1. Its function is as follows. Catalyzes the reversible transfer of the terminal phosphate group between ATP and AMP. Plays an important role in cellular energy homeostasis and in adenine nucleotide metabolism. The polypeptide is Adenylate kinase (Bartonella quintana (strain Toulouse) (Rochalimaea quintana)).